The chain runs to 73 residues: U-scoloptoxin(15)-Sm3a (73 aa).

Residues 1-23 form the signal peptide; that stretch reads MERKVFLLLFVIVLLTLPGFMSA.

Belongs to the scoloptoxin-15 family. Contains 2 disulfide bonds. In terms of tissue distribution, expressed by the venom gland.

Its subcellular location is the secreted. This is U-scoloptoxin(15)-Sm3a from Scolopendra morsitans (Tanzanian blue ringleg centipede).